Reading from the N-terminus, the 303-residue chain is Glycine--tRNA ligase alpha subunit (303 aa).

This sequence belongs to the class-II aminoacyl-tRNA synthetase family. Tetramer of two alpha and two beta subunits.

It is found in the cytoplasm. It carries out the reaction tRNA(Gly) + glycine + ATP = glycyl-tRNA(Gly) + AMP + diphosphate. The chain is Glycine--tRNA ligase alpha subunit from Escherichia fergusonii (strain ATCC 35469 / DSM 13698 / CCUG 18766 / IAM 14443 / JCM 21226 / LMG 7866 / NBRC 102419 / NCTC 12128 / CDC 0568-73).